We begin with the raw amino-acid sequence, 350 residues long: Very-long-chain 3-oxoacyl-CoA reductase (350 aa).

A helical transmembrane segment spans residues 20-40; sequence ALLFSLLFGVFKLTTFTLRFA. The NADP(+) site is built by V66, D120, N147, Y221, K225, V254, and S256. The Proton donor role is filled by Y221. K225 (lowers pKa of active site Tyr) is an active-site residue.

It belongs to the short-chain dehydrogenases/reductases (SDR) family.

It localises to the endoplasmic reticulum membrane. The enzyme catalyses a very-long-chain (3R)-3-hydroxyacyl-CoA + NADP(+) = a very-long-chain 3-oxoacyl-CoA + NADPH + H(+). Its pathway is lipid metabolism; fatty acid biosynthesis. Its function is as follows. Component of the microsomal membrane bound fatty acid elongation system, which produces the 26-carbon very long-chain fatty acids (VLCFA) from palmitate. Catalyzes the reduction of the 3-ketoacyl-CoA intermediate that is formed in each cycle of fatty acid elongation. VLCFAs serve as precursors for ceramide and sphingolipids. This chain is Very-long-chain 3-oxoacyl-CoA reductase, found in Lodderomyces elongisporus (strain ATCC 11503 / CBS 2605 / JCM 1781 / NBRC 1676 / NRRL YB-4239) (Yeast).